A 147-amino-acid polypeptide reads, in one-letter code: Large ribosomal subunit protein uL15 (147 aa).

Positions 1–28 are enriched in basic residues; it reads MIRRRKKVRKLRGSHTHGWGCKKKHRGG. Positions 1–43 are disordered; it reads MIRRRKKVRKLRGSHTHGWGCKKKHRGGGSKGGRGMAGTGKRN. A compositionally biased stretch (gly residues) spans 29–38; the sequence is GSKGGRGMAG.

It belongs to the universal ribosomal protein uL15 family. Part of the 50S ribosomal subunit.

Functionally, binds to the 23S rRNA. This Pyrococcus abyssi (strain GE5 / Orsay) protein is Large ribosomal subunit protein uL15.